The primary structure comprises 132 residues: Translation initiation factor 5A (132 aa).

Position 36 is a hypusine (lysine 36).

Belongs to the eIF-5A family.

It is found in the cytoplasm. In terms of biological role, functions by promoting the formation of the first peptide bond. This is Translation initiation factor 5A from Methanosphaera stadtmanae (strain ATCC 43021 / DSM 3091 / JCM 11832 / MCB-3).